The primary structure comprises 430 residues: NADH-quinone oxidoreductase subunit D 1 (430 aa).

The tract at residues 1–36 is disordered; the sequence is MSEAKGVGGIDPRATPGSAGAGERPPMGTVSRAGDG.

Belongs to the complex I 49 kDa subunit family. NDH-1 is composed of 14 different subunits. Subunits NuoB, C, D, E, F, and G constitute the peripheral sector of the complex.

It is found in the cell inner membrane. It carries out the reaction a quinone + NADH + 5 H(+)(in) = a quinol + NAD(+) + 4 H(+)(out). Functionally, NDH-1 shuttles electrons from NADH, via FMN and iron-sulfur (Fe-S) centers, to quinones in the respiratory chain. The immediate electron acceptor for the enzyme in this species is believed to be ubiquinone. Couples the redox reaction to proton translocation (for every two electrons transferred, four hydrogen ions are translocated across the cytoplasmic membrane), and thus conserves the redox energy in a proton gradient. This is NADH-quinone oxidoreductase subunit D 1 from Anaeromyxobacter dehalogenans (strain 2CP-C).